A 328-amino-acid chain; its full sequence is Thiamine thiazole synthase (328 aa).

Residues A87, 108–109 (EA), G116, and V181 contribute to the substrate site. Position 215 is a 2,3-didehydroalanine (Cys) (C215). Substrate contacts are provided by residues D217, H232, M284, and 294 to 296 (RMG).

This sequence belongs to the THI4 family. Homooctamer. Fe cation is required as a cofactor. Post-translationally, during the catalytic reaction, a sulfide is transferred from Cys-215 to a reaction intermediate, generating a dehydroalanine residue.

Its subcellular location is the cytoplasm. The protein resides in the nucleus. It carries out the reaction [ADP-thiazole synthase]-L-cysteine + glycine + NAD(+) = [ADP-thiazole synthase]-dehydroalanine + ADP-5-ethyl-4-methylthiazole-2-carboxylate + nicotinamide + 3 H2O + 2 H(+). Its function is as follows. Involved in biosynthesis of the thiamine precursor thiazole. Catalyzes the conversion of NAD and glycine to adenosine diphosphate 5-(2-hydroxyethyl)-4-methylthiazole-2-carboxylic acid (ADT), an adenylated thiazole intermediate. The reaction includes an iron-dependent sulfide transfer from a conserved cysteine residue of the protein to a thiazole intermediate. The enzyme can only undergo a single turnover, which suggests it is a suicide enzyme. May have additional roles in adaptation to various stress conditions and in DNA damage tolerance. This chain is Thiamine thiazole synthase (thi2), found in Schizosaccharomyces pombe (strain 972 / ATCC 24843) (Fission yeast).